The primary structure comprises 128 residues: Small ribosomal subunit protein bS16 (128 aa).

Residues 107–128 (AAEAKAAAANESDDSGTDSTES) are disordered. Acidic residues predominate over residues 117–128 (ESDDSGTDSTES).

The protein belongs to the bacterial ribosomal protein bS16 family.

This Synechococcus sp. (strain CC9311) protein is Small ribosomal subunit protein bS16.